A 258-amino-acid polypeptide reads, in one-letter code: Neurotrophin-3 (258 aa).

A signal peptide spans 1–18; it reads MSILFYVIFLAYLRGIQG. Residues 19 to 139 constitute a propeptide that is removed on maturation; the sequence is NNMDQRSLPE…TNRTSPRRKR (121 aa). Residues 60–85 are disordered; that stretch reads QSTLPKAEAPREPEQGEATRSEFQPM. Residues 67 to 79 are compositionally biased toward basic and acidic residues; the sequence is EAPREPEQGEATR. Asn131 carries N-linked (GlcNAc...) asparagine glycosylation. Disulfide bonds link Cys153–Cys218, Cys196–Cys247, and Cys206–Cys249.

The protein belongs to the NGF-beta family. As to expression, brain and peripheral tissues.

It is found in the secreted. Its function is as follows. Seems to promote the survival of visceral and proprioceptive sensory neurons. This is Neurotrophin-3 (Ntf3) from Rattus norvegicus (Rat).